The following is a 23-amino-acid chain: Potassium channel toxin alpha-KTx 13.3 (23 aa).

3 disulfide bridges follow: Cys2-Cys15, Cys5-Cys20, and Cys9-Cys22. Residues 13–20 (GKCINGRC) are interaction with Ca(2+)-activated K(+) channels. Residue Tyr23 is modified to Tyrosine amide.

As to expression, expressed by the venom gland.

The protein resides in the secreted. Reversibly blocks Shaker B potassium channels, with a dissociation constant of 200 nM. The protein is Potassium channel toxin alpha-KTx 13.3 of Tityus pachyurus (Colombian scorpion).